A 495-amino-acid polypeptide reads, in one-letter code: MAKNNAVAGFNALNGVELNLFTTDELKAIHYATMDVLMNPGVQVSDPEARQIFKENGCEVDEKTNVVKIPEYLVRRALQLAPSRFVLWGRDKKFNTVQECGGKVHWTCFGTGVKMCKYQDGKYVTVDSVEQDIADIAKLCDWAENIDYFSLPVSARDIAGQGAQDVHETLTPIANTAKHYHHIDPVGENVEYYRDIVTAYYGGDEEEARKKPIFSMLLCPTSPLELSVNACQVIIKGARFGMPVNVLSMAMSGGSSPVYLAGTLVTHNAEVLAGITLAQLTVPGTKVWYGSSTTTFDLKKGTAPVGSPELGLISASVAKLAQFYGLPAFVAGTOSDAKIPDNQAGHEKTMTCLLPALAGANTLYGAGMLELGMTFSMEQLVIDNDIIKMTKKALQGVPVNEETLAVESIQKVGIGNNFLALKQTRQLVNYPSDPMLIDRRMFGDWAAAGSKDLASAAHDKVVDVLKNHVVKPIDADILKDMQAVVDRADKAFRGM.

Residue pyrrolysine 334 is a non-standard amino acid, pyrrolysine.

It belongs to the trimethylamine methyltransferase family. Can form a complex with MttC.

The catalysed reaction is Co(I)-[trimethylamine-specific corrinoid protein] + trimethylamine + H(+) = methyl-Co(III)-[trimethylamine-specific corrinoid protein] + dimethylamine. Its pathway is one-carbon metabolism; methanogenesis from trimethylamine. Catalyzes the transfer of a methyl group from trimethylamine to the corrinoid cofactor of MttC. In Methanosarcina acetivorans (strain ATCC 35395 / DSM 2834 / JCM 12185 / C2A), this protein is Trimethylamine methyltransferase MttB1 (mttB1).